A 598-amino-acid polypeptide reads, in one-letter code: Aspartate--tRNA(Asp/Asn) ligase (598 aa).

Residue E174 coordinates L-aspartate. The tract at residues Q198–K201 is aspartate. Position 220 (R220) interacts with L-aspartate. ATP is bound by residues R220–E222 and Q229. Residue H458 participates in L-aspartate binding. Position 492 (E492) interacts with ATP. R499 serves as a coordination point for L-aspartate. G544–R547 lines the ATP pocket.

Belongs to the class-II aminoacyl-tRNA synthetase family. Type 1 subfamily. As to quaternary structure, homodimer.

The protein localises to the cytoplasm. It carries out the reaction tRNA(Asx) + L-aspartate + ATP = L-aspartyl-tRNA(Asx) + AMP + diphosphate. Functionally, aspartyl-tRNA synthetase with relaxed tRNA specificity since it is able to aspartylate not only its cognate tRNA(Asp) but also tRNA(Asn). Reaction proceeds in two steps: L-aspartate is first activated by ATP to form Asp-AMP and then transferred to the acceptor end of tRNA(Asp/Asn). The chain is Aspartate--tRNA(Asp/Asn) ligase from Dehalococcoides mccartyi (strain CBDB1).